The following is a 183-amino-acid chain: 1,6-anhydro-N-acetylmuramyl-L-alanine amidase AmpD (183 aa).

Positions 30–167 constitute an N-acetylmuramoyl-L-alanine amidase domain; it reads LLVVHNISLP…APDRKTDPGP (138 aa). Histidine 34 is a Zn(2+) binding site. Catalysis depends on glutamate 116, which acts as the Proton acceptor. 2 residues coordinate Zn(2+): histidine 154 and aspartate 164.

It belongs to the N-acetylmuramoyl-L-alanine amidase 2 family. It depends on Zn(2+) as a cofactor.

The protein localises to the cytoplasm. The catalysed reaction is Hydrolyzes the link between N-acetylmuramoyl residues and L-amino acid residues in certain cell-wall glycopeptides.. Involved in cell wall peptidoglycan recycling. Specifically cleaves the amide bond between the lactyl group of N-acetylmuramic acid and the alpha-amino group of the L-alanine in degradation products containing an anhydro N-acetylmuramyl moiety. Is also involved in beta-lactamase induction. The chain is 1,6-anhydro-N-acetylmuramyl-L-alanine amidase AmpD (ampD) from Escherichia coli (strain K12).